The following is a 1371-amino-acid chain: Perilipin-4 (1371 aa).

Residues 1 to 13 (MSAPDEGRRDPPK) show a composition bias toward basic and acidic residues. Positions 1 to 22 (MSAPDEGRRDPPKPKGKTLGSF) are disordered. Phosphoserine occurs at positions 25 and 31. Residues 37-86 (ANAHSSARARPAADPTGAPAAEAAQPQAQVAAHPEQTAPWTEKELQPSEK) are disordered. Positions 44-72 (RARPAADPTGAPAAEAAQPQAQVAAHPEQ) are enriched in low complexity. 27 consecutive repeat copies span residues 109 to 141 (GVASVVDVAKGVVQGGLDTTRSALTGTKEVVSS), 142 to 174 (GVTGAMDMAKGAVQGGLDTSKAVLTGTKDTVST), 175 to 207 (GLTGAVNVAKGTVQAGVDTTKTVLTGTKDTVTT), 208 to 240 (GVMGAVNLAKGTVQTGVETSKAVLTGTKDAVST), 241 to 273 (GLTGAVNVARGSIQTGVDTSKTVLTGTKDTVCS), 274 to 306 (GVTGAMNVAKGTIQTGVDTSKTVLTGTKDTVCS), 307 to 339 (GVTGAMNVAKGTIQTGVDTSKTVLTGTKDTVCS), 340 to 372 (GVTGAMNVAKGTIQTGVDTTKTVLTGTKNTVCS), 373 to 405 (GVTGAVNLAKEAIQGGLDTTKSMVMGTKDTMST), 406 to 438 (GLTGAANVAKGAMQTGLNTTQNIATGTKDTVCS), 439 to 471 (GVTGAMNLARGTIQTGVDTTKIVLTGTKDTVCS), 472 to 504 (GVTGAANVAKGAVQGGLDTTKSVLTGTKDAVST), 505 to 537 (GLTGAVNVAKGTVQTGVDTTKTVLTGTKDTVCS), 538 to 570 (GVTSAVNVAKGAVQGGLDTTKSVVIGTKDTMST), 571 to 603 (GLTGAANVAKGAVQTGVDTAKTVLTGTKDTVTT), 604 to 636 (GLVGAVNVAKGTVQTGMDTTKTVLTGTKDTIYS), 637 to 669 (GVTSAVNVAKGAVQTGLKTTQNIATGTKNTFGS), 670 to 702 (GVTSAVNVAKGAAQTGVDTAKTVLTGTKDTVTT), 703 to 735 (GLMGAVNVAKGTVQTSVDTTKTVLTGTKDTVCS), 736 to 768 (GVTGAANVAKGAIQGGLDTTKSVLTGTKDAVST), 769 to 801 (GLTGAVKLAKGTVQTGMDTTKTVLTGTKDAVCS), 802 to 834 (GVTGAANVAKGAVQMGVDTAKTVLTGTKDTVCS), 835 to 867 (GVTGAANVAKGAVQTGLKTTQNIATGTKNTLGS), 868 to 900 (GVTGAAKVAKGAVQGGLDTTKSVLTGTKDAVST), 901 to 933 (GLTGAVNLAKGTVQTGVDTSKTVLTGTKDTVCS), 934 to 966 (GVTGAVNVAKGTVQTGVDTAKTVLSGAKDAVTT), and 967 to 999 (GVTGAVNVAKGTVQTGVDASKAVLMGTKDTVFS). A 27 X 33 AA approximate tandem repeat region spans residues 109–999 (GVASVVDVAK…LMGTKDTVFS (891 aa)). Residues 1060-1083 (PATSWGGLTSSRTTDNGGEQTALS) show a composition bias toward polar residues. Disordered regions lie at residues 1060-1093 (PATSWGGLTSSRTTDNGGEQTALSPQEAPFSGIS) and 1240-1260 (QAPEGQPRLDQGSGASAEDAA).

The protein belongs to the perilipin family.

It localises to the cell membrane. It is found in the cytoplasm. Its subcellular location is the lipid droplet. Its function is as follows. May play a role in triacylglycerol packaging into adipocytes. May function as a coat protein involved in the biogenesis of lipid droplets. In Homo sapiens (Human), this protein is Perilipin-4.